We begin with the raw amino-acid sequence, 452 residues long: Ribulose bisphosphate carboxylase large chain (452 aa).

Positions 1–2 are excised as a propeptide; sequence MS. Pro-3 is subject to N-acetylproline. At Lys-14 the chain carries N6,N6,N6-trimethyllysine. Positions 123 and 173 each coordinate substrate. Lys-175 (proton acceptor) is an active-site residue. Residue Lys-177 participates in substrate binding. Positions 201, 203, and 204 each coordinate Mg(2+). Lys-201 carries the post-translational modification N6-carboxylysine. The Proton acceptor role is filled by His-294. Positions 295, 327, and 379 each coordinate substrate.

It belongs to the RuBisCO large chain family. Type I subfamily. Heterohexadecamer of 8 large chains and 8 small chains; disulfide-linked. The disulfide link is formed within the large subunit homodimers. Requires Mg(2+) as cofactor. The disulfide bond which can form in the large chain dimeric partners within the hexadecamer appears to be associated with oxidative stress and protein turnover.

It localises to the plastid. The protein resides in the chloroplast. It catalyses the reaction 2 (2R)-3-phosphoglycerate + 2 H(+) = D-ribulose 1,5-bisphosphate + CO2 + H2O. The enzyme catalyses D-ribulose 1,5-bisphosphate + O2 = 2-phosphoglycolate + (2R)-3-phosphoglycerate + 2 H(+). Its function is as follows. RuBisCO catalyzes two reactions: the carboxylation of D-ribulose 1,5-bisphosphate, the primary event in carbon dioxide fixation, as well as the oxidative fragmentation of the pentose substrate in the photorespiration process. Both reactions occur simultaneously and in competition at the same active site. The chain is Ribulose bisphosphate carboxylase large chain from Salvadora persica (Toothbrush tree).